The chain runs to 175 residues: Adenine phosphoribosyltransferase (175 aa).

It belongs to the purine/pyrimidine phosphoribosyltransferase family. As to quaternary structure, homodimer.

The protein localises to the cytoplasm. The catalysed reaction is AMP + diphosphate = 5-phospho-alpha-D-ribose 1-diphosphate + adenine. Its pathway is purine metabolism; AMP biosynthesis via salvage pathway; AMP from adenine: step 1/1. Its function is as follows. Catalyzes a salvage reaction resulting in the formation of AMP, that is energically less costly than de novo synthesis. The protein is Adenine phosphoribosyltransferase of Thermosipho melanesiensis (strain DSM 12029 / CIP 104789 / BI429).